The sequence spans 340 residues: 4-hydroxythreonine-4-phosphate dehydrogenase (340 aa).

T135 provides a ligand contact to substrate. A divalent metal cation contacts are provided by H170, H215, and H276. Residues K284, N293, and R302 each coordinate substrate.

It belongs to the PdxA family. In terms of assembly, homodimer. A divalent metal cation is required as a cofactor.

The protein localises to the cytoplasm. The catalysed reaction is 4-(phosphooxy)-L-threonine + NAD(+) = 3-amino-2-oxopropyl phosphate + CO2 + NADH. The protein operates within cofactor biosynthesis; pyridoxine 5'-phosphate biosynthesis; pyridoxine 5'-phosphate from D-erythrose 4-phosphate: step 4/5. Its function is as follows. Catalyzes the NAD(P)-dependent oxidation of 4-(phosphooxy)-L-threonine (HTP) into 2-amino-3-oxo-4-(phosphooxy)butyric acid which spontaneously decarboxylates to form 3-amino-2-oxopropyl phosphate (AHAP). The protein is 4-hydroxythreonine-4-phosphate dehydrogenase of Synechococcus sp. (strain JA-2-3B'a(2-13)) (Cyanobacteria bacterium Yellowstone B-Prime).